The sequence spans 339 residues: UDP-3-O-acylglucosamine N-acyltransferase (339 aa).

The active-site Proton acceptor is the His238.

It belongs to the transferase hexapeptide repeat family. LpxD subfamily. In terms of assembly, homotrimer.

The enzyme catalyses a UDP-3-O-[(3R)-3-hydroxyacyl]-alpha-D-glucosamine + a (3R)-hydroxyacyl-[ACP] = a UDP-2-N,3-O-bis[(3R)-3-hydroxyacyl]-alpha-D-glucosamine + holo-[ACP] + H(+). It functions in the pathway bacterial outer membrane biogenesis; LPS lipid A biosynthesis. In terms of biological role, catalyzes the N-acylation of UDP-3-O-acylglucosamine using 3-hydroxyacyl-ACP as the acyl donor. Is involved in the biosynthesis of lipid A, a phosphorylated glycolipid that anchors the lipopolysaccharide to the outer membrane of the cell. The chain is UDP-3-O-acylglucosamine N-acyltransferase from Aeromonas hydrophila subsp. hydrophila (strain ATCC 7966 / DSM 30187 / BCRC 13018 / CCUG 14551 / JCM 1027 / KCTC 2358 / NCIMB 9240 / NCTC 8049).